A 338-amino-acid chain; its full sequence is Phenylalanine--tRNA ligase alpha subunit (338 aa).

Position 253 (E253) interacts with Mg(2+).

This sequence belongs to the class-II aminoacyl-tRNA synthetase family. Phe-tRNA synthetase alpha subunit type 1 subfamily. As to quaternary structure, tetramer of two alpha and two beta subunits. It depends on Mg(2+) as a cofactor.

Its subcellular location is the cytoplasm. The enzyme catalyses tRNA(Phe) + L-phenylalanine + ATP = L-phenylalanyl-tRNA(Phe) + AMP + diphosphate + H(+). The chain is Phenylalanine--tRNA ligase alpha subunit from Syntrophus aciditrophicus (strain SB).